Reading from the N-terminus, the 1493-residue chain is Mitogen-activated protein kinase kinase kinase 1 (1493 aa).

The segment covering 1-23 (MAAAAGDRASSSGFPGAAAASPE) has biased composition (low complexity). Disordered regions lie at residues 1-178 (MAAA…PEER) and 194-300 (HEWL…EETS). Ala-2 carries the N-acetylalanine modification. Position 21 is a phosphoserine (Ser-21). Residues 24-35 (AGGGGGGGGALQ) show a composition bias toward gly residues. The segment covering 36–46 (GSGAPAAGAAG) has biased composition (low complexity). A compositionally biased stretch (pro residues) spans 89-99 (PPCPSTSPSPE). Residues 140–156 (ARSPAGAEPPSAAAPSG) are compositionally biased toward low complexity. The residue at position 142 (Ser-142) is a Phosphoserine. Basic and acidic residues predominate over residues 157 to 178 (REMENKETLKGLHKMEDRPEER). The segment covering 235–256 (SAAPAPKGRRSPSPGSSPSGRS) has biased composition (low complexity). At Ser-270 the chain carries Phosphoserine. The residue at position 280 (Thr-280) is a Phosphothreonine. Residues Ser-287, Ser-292, and Ser-295 each carry the phosphoserine modification. Residues 333-361 (YRVFIGPQNCSCGRGAFCIHLLFVMLRVF) form an SWIM-type zinc finger. The span at 411-428 (SNSHTLSSSSTSTSSSEN) shows a compositional bias: low complexity. A disordered region spans residues 411 to 431 (SNSHTLSSSSTSTSSSENSIK). The RING-type zinc finger occupies 438–487 (CPICLLGMLDEESLTVCEDGCRNKLHHHCMSIWAEECRRNREPLICPLCR). A phosphoserine mark is found at Ser-502 and Ser-526. Disordered stretches follow at residues 506–531 (SPASLRAVQQPSSPQQPVAGSQRRNQ) and 895–914 (EHTVHREKTGKGLSATRLSA). The span at 512 to 527 (AVQQPSSPQQPVAGSQ) shows a compositional bias: low complexity. Ser-915 is modified (phosphoserine). Disordered stretches follow at residues 927-957 (SVGLPSSTTTEQPKPAVQTKGRPHSQCLNSS) and 992-1066 (PCKI…TLDL). Over residues 998-1013 (ASPQTQRKFSLQFQRN) the composition is skewed to polar residues. Phosphoserine is present on residues Ser-999 and Ser-1024. Residues 1049 to 1063 (GSTSKLGDATKSSMT) show a composition bias toward polar residues. The Protein kinase domain maps to 1224 to 1489 (WLKGQQIGLG…SRELLKHPVF (266 aa)). ATP contacts are provided by residues 1230–1238 (IGLGAFSSC) and Lys-1253. The active-site Proton acceptor is Asp-1350. Phosphothreonine; by autocatalysis is present on residues Thr-1381 and Thr-1393.

The protein belongs to the protein kinase superfamily. STE Ser/Thr protein kinase family. MAP kinase kinase kinase subfamily. As to quaternary structure, binds both upstream activators and downstream substrates in multimolecular complexes through its N-terminus. Oligomerizes after binding MAP4K2 or TRAF2. Interacts with AXIN1. Interacts (via the kinase catalytic domain) with STK38. Interacts with GRIPAP1. The cofactor is Mg(2+). Autophosphorylated. As to expression, highly expressed in the heart and spleen while a lower level expression is seen in the liver.

The enzyme catalyses L-seryl-[protein] + ATP = O-phospho-L-seryl-[protein] + ADP + H(+). It catalyses the reaction L-threonyl-[protein] + ATP = O-phospho-L-threonyl-[protein] + ADP + H(+). Its activity is regulated as follows. Activated by autophosphorylation on Thr-1381 and Thr-1393 following oligomerization. Component of a protein kinase signal transduction cascade. Activates the ERK and JNK kinase pathways by phosphorylation of MAP2K1 and MAP2K4. May phosphorylate the MAPK8/JNK1 kinase. Activates CHUK and IKBKB, the central protein kinases of the NF-kappa-B pathway. The protein is Mitogen-activated protein kinase kinase kinase 1 (Map3k1) of Mus musculus (Mouse).